We begin with the raw amino-acid sequence, 202 residues long: Cryptic protein (202 aa).

A signal peptide spans 1-35 (MRANSPTQGISLKMHQARPLFLVTVALQLIGLGYS). Residue N65 is glycosylated (N-linked (GlcNAc...) asparagine). Residues 94–123 (PVSRCCHNGGTCVLGSFCVCPAYFTGRYCE) form the EGF-like domain. Intrachain disulfides connect C98–C105, C99–C111, and C113–C122. D166 carries the GPI-anchor amidated aspartate lipid modification. A propeptide spans 167-202 (LKSFLSSGARGSRECSIPSLLLLVLCLLLQGVAGKG) (removed in mature form).

The protein belongs to the EGF-CFC (Cripto-1/FRL1/Cryptic) family. N-glycosylated. As to expression, no expressed in adult tissues.

Its subcellular location is the cell membrane. The protein localises to the secreted. Functionally, nodal coreceptor involved in the correct establishment of the left-right axis. May play a role in mesoderm and/or neural patterning during gastrulation. This chain is Cryptic protein (Cfc1), found in Mus musculus (Mouse).